We begin with the raw amino-acid sequence, 533 residues long: Heterogeneous nuclear ribonucleoprotein Q (533 aa).

Ala2 carries the N-acetylalanine modification. Ser69 bears the Phosphoserine mark. 3 consecutive RRM domains span residues 72-151 (TEIF…ISVA), 153-235 (NRLF…WADP), and 248-318 (KVLF…FAKP). Lys78 is covalently cross-linked (Glycyl lysine isopeptide (Lys-Gly) (interchain with G-Cter in SUMO2)). Residue Lys131 is modified to N6-acetyllysine. Lys273 is subject to N6-acetyllysine. Tyr283 bears the Phosphotyrosine mark. Residues 310-471 (NIEIVFAKPP…GARGGRGGNV (162 aa)) are interaction with APOBEC1. Asymmetric dimethylarginine; by PRMT1; alternate is present on Arg354. An Omega-N-methylarginine; by PRMT1; alternate modification is found at Arg354. A run of 6 repeats spans residues 358–360 (RGG), 361–363 (RGG), 370–374 (YYGYE), 379–382 (YYGY), 388–390 (RGG), and 395–398 (YYGY). Positions 358–469 (RGGRGGYGYP…VRGARGGRGG (112 aa)) are 8 X 3 AA repeats of R-G-G. The interval 370–398 (YYGYEDYYDYYGYDYHNYRGGYEDPYYGY) is 3 X 4 AA repeats of Y-Y-G-Y. Arg406 is modified (omega-N-methylarginine; by PRMT1). The interval 407–533 (GRGGRGARGA…YQDTFGQQWK (127 aa)) is disordered. The 1-4 repeat unit spans residues 408-410 (RGG). The segment covering 414-432 (RGAAPSRGRGAAPPRGRAG) has biased composition (low complexity). Position 420 is an asymmetric dimethylarginine; by PRMT1 (Arg420). An Asymmetric dimethylarginine; by PRMT1; alternate modification is found at Arg428. At Arg428 the chain carries Omega-N-methylarginine; by PRMT1; alternate. Positions 428 to 459 (RGRAGYSQRGGPGSARGVRGARGGAQQQRGRG) are interaction with SMN. Arg436 bears the Asymmetric dimethylarginine; alternate mark. Arg436 is subject to Omega-N-methylarginine; alternate. Residues 436–438 (RGG) form a 1-5 repeat. Asymmetric dimethylarginine; by PRMT1; alternate is present on residues Arg446 and Arg449. An omega-N-methylarginine; by PRMT1; alternate mark is found at Arg446 and Arg449. 3 consecutive repeat copies span residues 449 to 451 (RGG), 464 to 466 (RGG), and 467 to 469 (RGG). Positions 460–472 (VRGARGGRGGNVG) are enriched in gly residues. Residues 474–488 (KRKADGYNQPDSKRR) carry the Bipartite nuclear localization signal motif. Residues 490 to 505 (TNNQNWGSQPIAQQPL) show a composition bias toward polar residues. A Phosphoserine modification is found at Ser497. A Glycyl lysine isopeptide (Lys-Gly) (interchain with G-Cter in SUMO2) cross-link involves residue Lys517.

Identified in a histone pre-mRNA complex, at least composed of ERI1, LSM11, SLBP, SNRPB, SYNCRIP and YBX1. Identified in the spliceosome C complex. Component of the coding region determinant (CRD)-mediated complex, composed of DHX9, HNRNPU, IGF2BP1, SYNCRIP and YBX1. Identified in a mRNP complex, at least composed of DHX9, DDX3X, ELAVL1, HNRNPU, IGF2BP1, ILF3, PABPC1, PCBP2, PTBP2, STAU1, STAU2, SYNCRIP and YBX1. Identified in a mRNP granule complex, at least composed of ACTB, ACTN4, DHX9, ERG, HNRNPA1, HNRNPA2B1, HNRNPAB, HNRNPD, HNRNPL, HNRNPR, HNRNPU, HSPA1, HSPA8, IGF2BP1, ILF2, ILF3, NCBP1, NCL, PABPC1, PABPC4, PABPN1, RPLP0, RPS3, RPS3A, RPS4X, RPS8, RPS9, SYNCRIP, YBX1 and untranslated mRNAs. Component of the APOB mRNA editosome. Interacts with APOBEC1 and A1CF. Part of a complex associated with the FOS mCRD domain and consisting of PABPC1, PAIP1, CSDE1/UNR, HNRPD and SYNCRIP. Interacts with HNRPR, SMN, POLR2A hyperphosphorylated C-terminal domain, minute virus of mice (MVM) NS1 protein and through its C-terminal domain with SYT7, SYT8 and SYT9. The non-phosphorylated and phosphorylated forms are colocalized with PAIP1 in polysomes. Interacts with GTPBP1. Interacts with HABP4. Post-translationally, phosphorylated on tyrosine. The membrane-bound form found in microsomes is phosphorylated in vitro by insulin receptor tyrosine kinase (INSR). Phosphorylation is inhibited upon binding to RNA, whereas the cytoplasmic form is poorly phosphorylated.

The protein localises to the nucleus. It localises to the nucleoplasm. It is found in the cytoplasm. Its subcellular location is the microsome. Functionally, heterogenous nuclear ribonucleoprotein (hnRNP) implicated in mRNA processing mechanisms. Component of the CRD-mediated complex that promotes MYC mRNA stability. Is associated in vitro with pre-mRNA, splicing intermediates and mature mRNA protein complexes. Binds to apoB mRNA AU-rich sequences. Part of the APOB mRNA editosome complex and may modulate the postranscriptional C to U RNA-editing of the APOB mRNA through either by binding to A1CF (APOBEC1 complementation factor), to APOBEC1 or to RNA itself. May be involved in translationally coupled mRNA turnover. Implicated with other RNA-binding proteins in the cytoplasmic deadenylation/translational and decay interplay of the FOS mRNA mediated by the major coding-region determinant of instability (mCRD) domain. Interacts in vitro preferentially with poly(A) and poly(U) RNA sequences. May be involved in cytoplasmic vesicle-based mRNA transport through interaction with synaptotagmins. The chain is Heterogeneous nuclear ribonucleoprotein Q (Syncrip) from Rattus norvegicus (Rat).